The primary structure comprises 455 residues: L-serine dehydratase (455 aa).

It belongs to the iron-sulfur dependent L-serine dehydratase family. [4Fe-4S] cluster serves as cofactor.

It carries out the reaction L-serine = pyruvate + NH4(+). The protein operates within carbohydrate biosynthesis; gluconeogenesis. The sequence is that of L-serine dehydratase (sdaA) from Helicobacter pylori (strain J99 / ATCC 700824) (Campylobacter pylori J99).